The sequence spans 1090 residues: MLTIVRGPVGSGKSRYCREEIIKVLKEAPLGPMVLYIVPESATFENEYLLNTREDLPGSFRLQVLSFSRLALNVVREFKAFFKNSSEFVYQHTLKKILQENKGKLQILQKAADNPGFIEDLLKLFKEFRRYRVKPENLEKASSEIENWMLQQKLKDVYLLYKLYLEKFGEEYTSEGLLEKFLEYAPKSKFLAGAKVFIDGFYTFTPLELEVIKTLLKTCAEVTVTLPTEYDPGIFNRLYSEALNLGIKVKELKLEKIERYRASELLHLAQNYYPLLPDPYSGSLENLSLIAAANPLEEMEKAARIIRYLAKFKGYKLSDILVLIPEDGYYISNIKTVFNEYGLPVYVDKGLAFDHHGLYFLLKGVLGEFNREAAINCLKSGLLNLTADEVFALENYLLSRGLDGEKLVLKEAWEDPNSSYWESWEKGFGEIISFSQILPLINTYREFSQSLKQLLLKIGVPRRISDENGERFWQAFTNLLTEIEEVFGAERLNPTTFAEELLAYLAKLSLKTIPKGLDQVRAGGSKRYWTGEARAVIILGAVEGKFPSPPAAGLIFTEEERAKLKKVGLELSPLIRQRLKEDNFHVFLALTRARERVYVSYPRVSLTGESFTPALLVDWLKKAFPNLKSEEGSYGNETTPQALTRLLSREMVKVKKNGELPFIAQGAFNALLLSKPELITKIARAFATNPGKIKLNAGFKEFLPSKTLSVSRLETYYSCPLKYFLKYLIKAEEREIFTPEATEIGALLHGAVAEIIKTVREKGQKLSTLLAEDLKTLVYQAFTKAQQEYGEKFLATYRGRYFLNRLYLMLFKAIEALAYFEGFTKFTPFGEEIAFGEKERLKSPVFEVNGEKYTLAGKIDRIDVYENNGKTYLRIIDYKTGSISISLDEVVGGINLQLLTYLLVASENKELFGENLVPAGAFYFRFQNPMLDEKAEGLSMEELKEEVYKNFRLSGYALKDEESLKHLDSFYAQNNKFKTVNLRTYKDGRIDNALTPAELEALFTKIKGLITEAIFKISAGEFSAIPYQLKDATGCRYCSYLEVCRLEEQEKQYRVIPRKKDPEVLLALSGGGVGDEKLDSRTNAGYHLQG.

7–14 (GPVGSGKS) is an ATP binding site. Positions 719, 1035, 1038, and 1044 each coordinate [4Fe-4S] cluster.

The protein belongs to the helicase family. AddB/RexB type 1 subfamily. In terms of assembly, heterodimer of AddA and AddB. Requires Mg(2+) as cofactor. The cofactor is [4Fe-4S] cluster.

Its function is as follows. The heterodimer acts as both an ATP-dependent DNA helicase and an ATP-dependent, dual-direction single-stranded exonuclease. Recognizes the chi site generating a DNA molecule suitable for the initiation of homologous recombination. The AddB subunit has 5' -&gt; 3' nuclease activity but not helicase activity. This is ATP-dependent helicase/deoxyribonuclease subunit B from Carboxydothermus hydrogenoformans (strain ATCC BAA-161 / DSM 6008 / Z-2901).